Here is a 257-residue protein sequence, read N- to C-terminus: Deoxyribose-phosphate aldolase (257 aa).

D102 serves as the catalytic Proton donor/acceptor. K166 serves as the catalytic Schiff-base intermediate with acetaldehyde. K198 functions as the Proton donor/acceptor in the catalytic mechanism.

Belongs to the DeoC/FbaB aldolase family. DeoC type 2 subfamily.

Its subcellular location is the cytoplasm. It carries out the reaction 2-deoxy-D-ribose 5-phosphate = D-glyceraldehyde 3-phosphate + acetaldehyde. It functions in the pathway carbohydrate degradation; 2-deoxy-D-ribose 1-phosphate degradation; D-glyceraldehyde 3-phosphate and acetaldehyde from 2-deoxy-alpha-D-ribose 1-phosphate: step 2/2. Catalyzes a reversible aldol reaction between acetaldehyde and D-glyceraldehyde 3-phosphate to generate 2-deoxy-D-ribose 5-phosphate. This Shewanella woodyi (strain ATCC 51908 / MS32) protein is Deoxyribose-phosphate aldolase.